The sequence spans 284 residues: Pantothenate synthetase (284 aa).

Residue methionine 30–histidine 37 participates in ATP binding. The active-site Proton donor is histidine 37. Residue glutamine 61 coordinates (R)-pantoate. Position 61 (glutamine 61) interacts with beta-alanine. ATP is bound at residue glycine 149–aspartate 152. Glutamine 155 is a binding site for (R)-pantoate. ATP-binding positions include isoleucine 178 and leucine 186 to arginine 189.

This sequence belongs to the pantothenate synthetase family. In terms of assembly, homodimer.

The protein localises to the cytoplasm. The enzyme catalyses (R)-pantoate + beta-alanine + ATP = (R)-pantothenate + AMP + diphosphate + H(+). It participates in cofactor biosynthesis; (R)-pantothenate biosynthesis; (R)-pantothenate from (R)-pantoate and beta-alanine: step 1/1. Functionally, catalyzes the condensation of pantoate with beta-alanine in an ATP-dependent reaction via a pantoyl-adenylate intermediate. The polypeptide is Pantothenate synthetase (Salmonella heidelberg (strain SL476)).